The sequence spans 126 residues: Putative lipoprotein LprD (126 aa).

The signal sequence occupies residues Met1–Gly21. A lipid anchor (N-palmitoyl cysteine) is attached at Cys22. The S-diacylglycerol cysteine moiety is linked to residue Cys22. The helical transmembrane segment at Phe40–Tyr60 threads the bilayer. Residues Pro70 to Pro101 form a disordered region.

The protein to M.leprae ML1177.

The protein resides in the cell membrane. This is Putative lipoprotein LprD (lprD) from Mycobacterium tuberculosis (strain CDC 1551 / Oshkosh).